We begin with the raw amino-acid sequence, 146 residues long: MTKKIEEKIEGVIESLGYLLYDVSLVKENEQHILRVSLKNPNGAVSLDICQQVSEIISPLLDVCDFIQDAYILEVSSMGLERTLKTPKHFKLSLGEKVEVKLTNKESFQAVLKDANDLSADFELEDHAIKSVEYKDLKKVKTLFEW.

Belongs to the RimP family.

It localises to the cytoplasm. In terms of biological role, required for maturation of 30S ribosomal subunits. In Helicobacter pylori (strain G27), this protein is Ribosome maturation factor RimP.